The chain runs to 489 residues: Serine/threonine-protein kinase BSK3 (489 aa).

The N-myristoyl glycine moiety is linked to residue Gly-2. The Protein kinase domain maps to 58-324 (EYIVSEHGEK…ETEVLSHVLM (267 aa)). ATP contacts are provided by residues 64-72 (HGEKAPNVV) and Lys-86. Asp-180 (proton acceptor) is an active-site residue. Position 212 is a phosphoserine (Ser-212).

The protein belongs to the protein kinase superfamily. Ser/Thr protein kinase family. As to quaternary structure, interacts with BRI1. Post-translationally, phosphorylated by BRI1 upon brassinolide (BL) treatment. Phosphorylated by ASK7/BIN2 and ASK9/BIL2.

The protein localises to the cell membrane. The enzyme catalyses L-seryl-[protein] + ATP = O-phospho-L-seryl-[protein] + ADP + H(+). It carries out the reaction L-threonyl-[protein] + ATP = O-phospho-L-threonyl-[protein] + ADP + H(+). Its function is as follows. Probable serine/threonine kinase that acts as a positive regulator of brassinosteroid (BR) signaling downstream of the receptor kinase BRI1. Mediates signal transduction from BRI1 by functioning as substrate of BRI1. Functions redundantly with BSK4, BSK6, BSK7 and BSK8. This Arabidopsis thaliana (Mouse-ear cress) protein is Serine/threonine-protein kinase BSK3.